The primary structure comprises 161 residues: Regulator of ribonuclease activity A (161 aa).

Belongs to the RraA family. In terms of assembly, homotrimer. Binds to both RNA-binding sites in the C-terminal region of Rne and to RhlB.

It localises to the cytoplasm. Functionally, globally modulates RNA abundance by binding to RNase E (Rne) and regulating its endonucleolytic activity. Can modulate Rne action in a substrate-dependent manner by altering the composition of the degradosome. Modulates RNA-binding and helicase activities of the degradosome. The chain is Regulator of ribonuclease activity A from Yersinia enterocolitica serotype O:8 / biotype 1B (strain NCTC 13174 / 8081).